A 128-amino-acid polypeptide reads, in one-letter code: Cytochrome c oxidase subunit 5B, mitochondrial (128 aa).

A mitochondrion-targeting transit peptide spans 1–30; the sequence is MASRLLRGVGALAAQALRRTARGAAVTRSM. N6-acetyllysine is present on residues Lys67 and Lys85. Zn(2+)-binding residues include Cys90, Cys92, Cys112, and Cys115. Lys120 carries the N6-acetyllysine modification.

It belongs to the cytochrome c oxidase subunit 5B family. Component of the cytochrome c oxidase (complex IV, CIV), a multisubunit enzyme composed of 14 subunits. The complex is composed of a catalytic core of 3 subunits MT-CO1, MT-CO2 and MT-CO3, encoded in the mitochondrial DNA, and 11 supernumerary subunits COX4I, COX5A, COX5B, COX6A, COX6B, COX6C, COX7A, COX7B, COX7C, COX8 and NDUFA4, which are encoded in the nuclear genome. The complex exists as a monomer or a dimer and forms supercomplexes (SCs) in the inner mitochondrial membrane with NADH-ubiquinone oxidoreductase (complex I, CI) and ubiquinol-cytochrome c oxidoreductase (cytochrome b-c1 complex, complex III, CIII), resulting in different assemblies (supercomplex SCI(1)III(2)IV(1) and megacomplex MCI(2)III(2)IV(2)).

The protein resides in the mitochondrion inner membrane. It functions in the pathway energy metabolism; oxidative phosphorylation. Component of the cytochrome c oxidase, the last enzyme in the mitochondrial electron transport chain which drives oxidative phosphorylation. The respiratory chain contains 3 multisubunit complexes succinate dehydrogenase (complex II, CII), ubiquinol-cytochrome c oxidoreductase (cytochrome b-c1 complex, complex III, CIII) and cytochrome c oxidase (complex IV, CIV), that cooperate to transfer electrons derived from NADH and succinate to molecular oxygen, creating an electrochemical gradient over the inner membrane that drives transmembrane transport and the ATP synthase. Cytochrome c oxidase is the component of the respiratory chain that catalyzes the reduction of oxygen to water. Electrons originating from reduced cytochrome c in the intermembrane space (IMS) are transferred via the dinuclear copper A center (CU(A)) of subunit 2 and heme A of subunit 1 to the active site in subunit 1, a binuclear center (BNC) formed by heme A3 and copper B (CU(B)). The BNC reduces molecular oxygen to 2 water molecules using 4 electrons from cytochrome c in the IMS and 4 protons from the mitochondrial matrix. This is Cytochrome c oxidase subunit 5B, mitochondrial (Cox5b) from Mus musculus (Mouse).